Reading from the N-terminus, the 938-residue chain is Catenin delta-1 (938 aa).

M1 is subject to N-acetylmethionine. Residues 1–357 (MDDSEVESTA…ASLDSLRKGM (357 aa)) are necessary and sufficient for interaction with CCDC85B. S4 carries the phosphoserine modification. The stretch at 10 to 46 (ASILASVKEQEAQFEKLTRALEEERRHVSAQLERVRV) forms a coiled coil. A Phosphoserine modification is found at S47. The residue at position 59 (T59) is a Phosphothreonine. The residue at position 112 (Y112) is a Phosphotyrosine; by FYN. A Phosphoserine modification is found at S125. Y217 and Y221 each carry phosphotyrosine. The residue at position 225 (S225) is a Phosphoserine. Y228 is subject to Phosphotyrosine. Phosphoserine occurs at positions 230 and 252. Y257 carries the post-translational modification Phosphotyrosine. A phosphoserine mark is found at S268 and S269. Y280 carries the phosphotyrosine modification. S288 carries the post-translational modification Phosphoserine. Y291 is modified (phosphotyrosine). At S300 the chain carries Phosphoserine. The residue at position 304 (T304) is a Phosphothreonine. 4 positions are modified to phosphoserine: S320, S346, S349, and S352. ARM repeat units follow at residues 358-395 (PPPSNWRQPELPEVIAMLGFRLDAVKSNAAAYLQHLCY), 398-437 (DKVKTDVRKLKGIPILVGLLDHPKKEVHLGACGALKNISF), 441-475 (QDNKIAIKNCDGVPALVRLLRKARDMDLTEVITGT), and 476-516 (LWNL…NEDC). K421 participates in a covalent cross-link: Glycyl lysine isopeptide (Lys-Gly) (interchain with G-Cter in SUMO2). K517 participates in a covalent cross-link: Glycyl lysine isopeptide (Lys-Gly) (interchain with G-Cter in SUMO2). ARM repeat units follow at residues 534–573 (LRNVSSERSEARRKLRECDGLVDALIFIVQAEIGQKDSDS), 583–624 (LRNL…AKKG), 653–693 (ARGY…NLCA), 700–739 (RYIRSALRQEKALSAIAELLTSEHERVVKAASGALRNLAV), 740–780 (DARN…SILN), and 781–826 (TINE…ALVL). S617 carries the post-translational modification Phosphoserine. Positions 622–629 (KKGKDEWF) match the Nuclear localization signal (NLS) motif. S713 bears the Phosphoserine mark. Residues S811, S847, S857, S859, S861, and S864 each carry the phosphoserine modification. The segment at 855–938 (NASRSQSSHS…LKGAPLMQKI (84 aa)) is disordered. The residue at position 865 (Y865) is a Phosphotyrosine. The residue at position 868 (S868) is a Phosphoserine. Residue T869 is modified to Phosphothreonine. Residues 875–888 (RNQKSDKKPDREEI) are compositionally biased toward basic and acidic residues. Position 879 is a phosphoserine (S879). K882 is covalently cross-linked (Glycyl lysine isopeptide (Lys-Gly) (interchain with G-Cter in SUMO2)). Polar residues predominate over residues 892–908 (NMGSNTKSLDNNYSTLN). S899 carries the phosphoserine modification. Phosphotyrosine is present on Y904. T906 and T916 each carry phosphothreonine. The segment covering 909-922 (ERGDHNRTLDRSGD) has biased composition (basic and acidic residues). Residue S920 is modified to Phosphoserine.

This sequence belongs to the beta-catenin family. As to quaternary structure, belongs to a multiprotein cell-cell adhesion complex that also contains E-cadherin/CDH1, alpha-catenin/CTNNA1, beta-catenin/CTNNB1, and gamma-catenin/JUP. Binds to the C-terminal fragment of PSEN1 and mutually competes for CDH1. Interacts with ZBTB33. Interacts with GLIS2. Interacts with FER. Interacts with NANOS1 (via N-terminal region). Interacts (via N-terminus) with GNA12; the interaction regulates CDH1-mediated cell-cell adhesion. Interacts with GNA13. Component of a cadherin:catenin adhesion complex composed of at least of CDH26, beta-catenin/CTNNB1, alpha-catenin/CTNNA1 and p120 catenin/CTNND1. Interacts with CCDC85B. Interacts with PLPP3; negatively regulates the PLPP3-mediated stabilization of CTNNB1. Interacts with DSG3; the interaction facilitates DSG3 localization and retention at cell-cell junctions. Interacts with CTNND1/p120-catenin; the interaction controls CADH5 endocytosis. Post-translationally, phosphorylated by FER and other protein-tyrosine kinases. Phosphorylated at Ser-288 by PAK5. Dephosphorylated by PTPRJ. Expressed in basal keratinocytes (at protein level).

It is found in the cell junction. The protein resides in the adherens junction. It localises to the cytoplasm. The protein localises to the nucleus. Its subcellular location is the cell membrane. Key regulator of cell-cell adhesion that associates with and regulates the cell adhesion properties of both C-, E- and N-cadherins, being critical for their surface stability. Promotes localization and retention of DSG3 at cell-cell junctions, via its interaction with DSG3. Beside cell-cell adhesion, regulates gene transcription through several transcription factors including ZBTB33/Kaiso2 and GLIS2, and the activity of Rho family GTPases and downstream cytoskeletal dynamics. Implicated both in cell transformation by SRC and in ligand-induced receptor signaling through the EGF, PDGF, CSF-1 and ERBB2 receptors. This Mus musculus (Mouse) protein is Catenin delta-1 (Ctnnd1).